We begin with the raw amino-acid sequence, 114 residues long: Turripeptide OL22 (114 aa).

Contains 6 disulfide bonds. In terms of tissue distribution, expressed by the venom duct.

Its subcellular location is the secreted. Its function is as follows. Acts as a neurotoxin by inhibiting an ion channel. This chain is Turripeptide OL22, found in Iotyrris olangoensis (Sea snail).